The primary structure comprises 451 residues: MTARSSLTIVLAAGEGTRMRSHLPKVLHPVAHQTLLAHVLTAAPKGTGTSLAVVIGPDHQAVADEARRIRPDAVTFVQAERLGTAHAVLAAREAIARGVDDLLIAFGDTPLISAETFARLRAPLANGAALAALGFRAADPAGYGRFIVEGDRLVAIREQADASADERKIDLCNAGVMAIDGRRALAILDKIGNANSKGEYYLTDAVEIVREQGWESVVIETSEDEVRGINTKAQLAEAESVMQARLRKAAMEAGVTLIAPETVYLSADTVFGKDVTIEPFVVIGPGVSIADGTVIHSFSHIVETTLGRNVSIGPYARLRPGTSLGDGARIGNFVETKAATLEAGVKVNHLSYIGDATVGANSNIGAGTITCNYDGFKKHKTIIGQGAFVGTNSSLVAPVKIGNGAYIGSGSVITRDVPDDAMALERNQQTIREGGAARYREMKTRGKKPEK.

The interval M1 to K232 is pyrophosphorylase. Residues L11–G14, K25, Q78, and G83–T84 each bind UDP-N-acetyl-alpha-D-glucosamine. A Mg(2+)-binding site is contributed by D108. The UDP-N-acetyl-alpha-D-glucosamine site is built by G144, E158, N173, and N230. Position 230 (N230) interacts with Mg(2+). Residues A233–A253 are linker. Residues G254–K451 are N-acetyltransferase. Residues R319 and K337 each contribute to the UDP-N-acetyl-alpha-D-glucosamine site. The active-site Proton acceptor is H349. UDP-N-acetyl-alpha-D-glucosamine-binding residues include Y352 and N363. Acetyl-CoA is bound by residues A366, N372 to Y373, S409, and R426.

It in the N-terminal section; belongs to the N-acetylglucosamine-1-phosphate uridyltransferase family. The protein in the C-terminal section; belongs to the transferase hexapeptide repeat family. Homotrimer. The cofactor is Mg(2+).

The protein localises to the cytoplasm. It catalyses the reaction alpha-D-glucosamine 1-phosphate + acetyl-CoA = N-acetyl-alpha-D-glucosamine 1-phosphate + CoA + H(+). The enzyme catalyses N-acetyl-alpha-D-glucosamine 1-phosphate + UTP + H(+) = UDP-N-acetyl-alpha-D-glucosamine + diphosphate. It participates in nucleotide-sugar biosynthesis; UDP-N-acetyl-alpha-D-glucosamine biosynthesis; N-acetyl-alpha-D-glucosamine 1-phosphate from alpha-D-glucosamine 6-phosphate (route II): step 2/2. It functions in the pathway nucleotide-sugar biosynthesis; UDP-N-acetyl-alpha-D-glucosamine biosynthesis; UDP-N-acetyl-alpha-D-glucosamine from N-acetyl-alpha-D-glucosamine 1-phosphate: step 1/1. The protein operates within bacterial outer membrane biogenesis; LPS lipid A biosynthesis. In terms of biological role, catalyzes the last two sequential reactions in the de novo biosynthetic pathway for UDP-N-acetylglucosamine (UDP-GlcNAc). The C-terminal domain catalyzes the transfer of acetyl group from acetyl coenzyme A to glucosamine-1-phosphate (GlcN-1-P) to produce N-acetylglucosamine-1-phosphate (GlcNAc-1-P), which is converted into UDP-GlcNAc by the transfer of uridine 5-monophosphate (from uridine 5-triphosphate), a reaction catalyzed by the N-terminal domain. The protein is Bifunctional protein GlmU of Bradyrhizobium diazoefficiens (strain JCM 10833 / BCRC 13528 / IAM 13628 / NBRC 14792 / USDA 110).